The sequence spans 608 residues: DNA mismatch repair protein MutL (608 aa).

The protein belongs to the DNA mismatch repair MutL/HexB family.

This protein is involved in the repair of mismatches in DNA. It is required for dam-dependent methyl-directed DNA mismatch repair. May act as a 'molecular matchmaker', a protein that promotes the formation of a stable complex between two or more DNA-binding proteins in an ATP-dependent manner without itself being part of a final effector complex. This Elusimicrobium minutum (strain Pei191) protein is DNA mismatch repair protein MutL.